Here is a 327-residue protein sequence, read N- to C-terminus: Urease accessory protein 4 (327 aa).

Residue Asn-120 is glycosylated (N-linked (GlcNAc...) asparagine). Residues 239 to 259 form a helical membrane-spanning segment; the sequence is VYATVLIIGPHLTTLFSYLAY.

It belongs to the UreD family. As to quaternary structure, URE4, URE6 and URE7 may form a complex that acts as a GTP-hydrolysis-dependent molecular chaperone, activating the urease apoprotein URE1.

It is found in the membrane. Its function is as follows. Urease accessory protein required for the maturation and activation of urease via the functional incorporation of the urease nickel metallocenter. Plays a role in host brain invasion. This chain is Urease accessory protein 4, found in Cryptococcus neoformans var. grubii serotype A (strain H99 / ATCC 208821 / CBS 10515 / FGSC 9487) (Filobasidiella neoformans var. grubii).